The sequence spans 419 residues: eIF5-mimic protein 1 (419 aa).

The segment at 1–22 (MNKHQKPVLTGQRFKTRKRDEK) is disordered. N6-acetyllysine is present on Lys117. One can recognise a W2 domain in the interval 248–415 (VQQSLGTRKE…QNAEEESESE (168 aa)). Phosphoserine is present on residues Ser412, Ser414, and Ser419.

Belongs to the BZW family. Interacts with EIF3E, EIF2S2 and EIF3C. As to expression, expressed at high levels in heart, and at lower levels in skeletal muscle, spleen and lung. Expressed at low levels in brain regions where nascent and immature neurons are present.

It is found in the cytoplasm. In terms of biological role, translation initiation regulator which represses non-AUG initiated translation and repeat-associated non-AUG (RAN) initiated translation by acting as a competitive inhibitor of eukaryotic translation initiation factor 5 (EIF5) function. Increases the accuracy of translation initiation by impeding EIF5-dependent translation from non-AUG codons by competing with it for interaction with EIF2S2 within the 43S pre-initiation complex (PIC) in an EIF3C-binding dependent manner. The protein is eIF5-mimic protein 1 (Bzw2) of Rattus norvegicus (Rat).